A 354-amino-acid polypeptide reads, in one-letter code: Quinone-reactive Ni/Fe-hydrogenase small chain (354 aa).

The segment at residues 1 to 36 (MLEEKGIERRDFMKWAGAMTAMLSLPATFTPLTAKA) is a signal peptide (tat-type signal). [4Fe-4S] cluster is bound by residues Cys-53, Cys-56, Cys-153, Cys-186, His-224, Cys-227, Cys-252, and Cys-258. 3 residues coordinate [3Fe-4S] cluster: Cys-267, Cys-286, and Cys-289.

It belongs to the [NiFe]/[NiFeSe] hydrogenase small subunit family. As to quaternary structure, heterodimer of a large and a small subunit. It depends on [4Fe-4S] cluster as a cofactor. Requires [3Fe-4S] cluster as cofactor. Post-translationally, predicted to be exported by the Tat system. The position of the signal peptide cleavage has been experimentally proven.

The protein localises to the cell membrane. It catalyses the reaction H2 + a menaquinone = a menaquinol. This is Quinone-reactive Ni/Fe-hydrogenase small chain (hydA) from Wolinella succinogenes (strain ATCC 29543 / DSM 1740 / CCUG 13145 / JCM 31913 / LMG 7466 / NCTC 11488 / FDC 602W) (Vibrio succinogenes).